The chain runs to 115 residues: Large ribosomal subunit protein bL19 (115 aa).

The protein belongs to the bacterial ribosomal protein bL19 family.

In terms of biological role, this protein is located at the 30S-50S ribosomal subunit interface and may play a role in the structure and function of the aminoacyl-tRNA binding site. This chain is Large ribosomal subunit protein bL19, found in Yersinia pseudotuberculosis serotype O:1b (strain IP 31758).